A 432-amino-acid chain; its full sequence is Fibroleukin (432 aa).

Positions 1 to 19 (MRLPGWLWLSSAVLAACRA) are cleaved as a signal peptide. Asn24 carries N-linked (GlcNAc...) asparagine glycosylation. The stretch at 71–157 (GSMEEVLKEV…QGRLETLHLV (87 aa)) forms a coiled coil. Residues 100-122 (QADDHRDPGGNGGNGAETAEDSR) are disordered. 4 N-linked (GlcNAc...) asparagine glycosylation sites follow: Asn172, Asn228, Asn256, and Asn329. Residues 197 to 429 (PVQHLIYKDC…QAKMMIRPKN (233 aa)) enclose the Fibrinogen C-terminal domain. Cysteines 206 and 235 form a disulfide. A disulfide bond links Cys364 and Cys377.

As to quaternary structure, homotetramer; disulfide-linked. As to expression, constitutively expressed in cytotoxic T-cells.

The protein localises to the secreted. Its function is as follows. Converts prothrombin to thrombin. The chain is Fibroleukin (Fgl2) from Mus musculus (Mouse).